We begin with the raw amino-acid sequence, 364 residues long: Guanine nucleotide-binding protein alpha-6 subunit (364 aa).

The interval 1–29 (MGAGATGLRGARLSPEERANSSKSRAIDR) is disordered. Gly-2 carries N-myristoyl glycine lipidation. Basic and acidic residues predominate over residues 14–29 (SPEERANSSKSRAIDR). Residues 40–363 (NRFKILLLGT…NENLRSAGLH (324 aa)) form the G-alpha domain. The interval 43-56 (KILLLGTAESGKST) is G1 motif. GTP contacts are provided by residues 48–55 (GTAESGKS), 186–192 (VHCRIST), 211–215 (DVGGQ), 280–283 (NKYD), and Ala-335. Mg(2+)-binding residues include Ser-55 and Thr-192. The tract at residues 184 to 192 (DIVHCRIST) is G2 motif. The tract at residues 207 to 216 (FKMVDVGGQR) is G3 motif. Residues 276 to 283 (VLFLNKYD) are G4 motif. Residues 333–338 (TTATDT) form a G5 motif region.

The protein belongs to the G-alpha family. As to quaternary structure, g proteins are composed of 3 units; alpha, beta and gamma. The alpha chain contains the guanine nucleotide binding site.

Guanine nucleotide-binding proteins (G proteins) are involved as modulators or transducers in various transmembrane signaling systems. The chain is Guanine nucleotide-binding protein alpha-6 subunit (gpa-6) from Caenorhabditis elegans.